A 156-amino-acid polypeptide reads, in one-letter code: Small ribosomal subunit protein uS7 (156 aa).

This sequence belongs to the universal ribosomal protein uS7 family. In terms of assembly, part of the 30S ribosomal subunit. Contacts proteins S9 and S11.

In terms of biological role, one of the primary rRNA binding proteins, it binds directly to 16S rRNA where it nucleates assembly of the head domain of the 30S subunit. Is located at the subunit interface close to the decoding center, probably blocks exit of the E-site tRNA. This is Small ribosomal subunit protein uS7 from Shewanella woodyi (strain ATCC 51908 / MS32).